The primary structure comprises 528 residues: GMP synthase [glutamine-hydrolyzing] (528 aa).

The 197-residue stretch at 3-199 (KVAIIDFGSQ…FLDIAGCQKD (197 aa)) folds into the Glutamine amidotransferase type-1 domain. C83 functions as the Nucleophile in the catalytic mechanism. Residues H174 and E176 contribute to the active site. The GMPS ATP-PPase domain occupies 200–394 (WTVTSFIDDQ…LGISTEILMR (195 aa)). ATP is bound at residue 227–233 (SGGVDSS).

Homodimer.

It carries out the reaction XMP + L-glutamine + ATP + H2O = GMP + L-glutamate + AMP + diphosphate + 2 H(+). It participates in purine metabolism; GMP biosynthesis; GMP from XMP (L-Gln route): step 1/1. Catalyzes the synthesis of GMP from XMP. This chain is GMP synthase [glutamine-hydrolyzing], found in Ehrlichia ruminantium (strain Welgevonden).